A 536-amino-acid polypeptide reads, in one-letter code: Zinc finger protein 394 (536 aa).

The tract at residues 18–45 (AVKVEEDSPGSQEPSGSGDWQNPETSRK) is disordered. A Glycyl lysine isopeptide (Lys-Gly) (interchain with G-Cter in SUMO2) cross-link involves residue Lys-20. Over residues 26-41 (PGSQEPSGSGDWQNPE) the composition is skewed to polar residues. An SCAN box domain is found at 44–126 (RKQFRQLRYQ…ALARTLQRAL (83 aa)). The KRAB domain maps to 135 to 196 (ATFKDVAESL…KQEMSKEAES (62 aa)). Residues Lys-207 and Lys-260 each participate in a glycyl lysine isopeptide (Lys-Gly) (interchain with G-Cter in SUMO2) cross-link. 3 consecutive C2H2-type zinc fingers follow at residues 328–350 (YKCD…QRTH), 356–378 (YQCQ…QRTH), and 384–406 (YACP…QRTH). The segment at 412 to 433 (CKCEECGEIFHISSLFKHQRLH) adopts a C2H2-type 4; atypical zinc-finger fold. A Glycyl lysine isopeptide (Lys-Gly) (interchain with G-Cter in SUMO2) cross-link involves residue Lys-413. 3 consecutive C2H2-type zinc fingers follow at residues 439–461 (HKCE…QRIH), 467–489 (YMCF…QRTH), and 495–517 (YKCF…QRIH).

It belongs to the krueppel C2H2-type zinc-finger protein family.

It localises to the nucleus. May be involved in transcriptional regulation. The sequence is that of Zinc finger protein 394 (Znf394) from Rattus norvegicus (Rat).